We begin with the raw amino-acid sequence, 570 residues long: Probable D-xylulose kinase A (570 aa).

3 residues coordinate substrate: H98, D279, and N280. Residues W363, 470 to 471 (GG), and N474 each bind ATP.

The protein belongs to the FGGY kinase family.

Its subcellular location is the cytoplasm. The enzyme catalyses D-xylulose + ATP = D-xylulose 5-phosphate + ADP + H(+). Highly specific D-xylulose kinase which participates in the catabolism of xylose. Xylose is a major component of hemicelluloses such as xylan. Most fungi utilize D-xylose via three enzymatic reactions, xylose reductase (XR), xylitol dehydrogenase (XDH), and xylulokinase, to form xylulose 5-phosphate, which enters pentose phosphate pathway. The polypeptide is Probable D-xylulose kinase A (xkiA) (Arthroderma otae (strain ATCC MYA-4605 / CBS 113480) (Microsporum canis)).